Reading from the N-terminus, the 316-residue chain is tRNA dimethylallyltransferase (316 aa).

Residue 17-24 (GPTASGKT) participates in ATP binding. Substrate is bound at residue 19 to 24 (TASGKT). Interaction with substrate tRNA regions lie at residues 42–45 (DSAL), 166–170 (QRLSR), 247–252 (RCVGYR), and 280–287 (KRQITWLR).

It belongs to the IPP transferase family. In terms of assembly, monomer. The cofactor is Mg(2+).

It catalyses the reaction adenosine(37) in tRNA + dimethylallyl diphosphate = N(6)-dimethylallyladenosine(37) in tRNA + diphosphate. Its function is as follows. Catalyzes the transfer of a dimethylallyl group onto the adenine at position 37 in tRNAs that read codons beginning with uridine, leading to the formation of N6-(dimethylallyl)adenosine (i(6)A). The chain is tRNA dimethylallyltransferase from Cronobacter sakazakii (strain ATCC BAA-894) (Enterobacter sakazakii).